The sequence spans 469 residues: NADH-quinone oxidoreductase subunit N (469 aa).

The next 14 helical transmembrane spans lie at 6-26, 37-57, 61-81, 96-116, 121-141, 156-176, 197-217, 234-254, 263-283, 291-311, 315-335, 362-382, 397-419, and 441-461; these read IWII…LLLG, VGVA…PAAL, LGVA…LTAA, ISGE…AVVS, LLIL…LVAI, LLLG…LYAA, PIAL…ISLV, VVAF…LLLL, LHTP…LAAL, MLAY…LTGS, FAAV…AFGA, AGIL…AGFI, IPLA…RVVV, and IALS…SPLL.

The protein belongs to the complex I subunit 2 family. As to quaternary structure, NDH-1 is composed of 14 different subunits. Subunits NuoA, H, J, K, L, M, N constitute the membrane sector of the complex.

It localises to the cell inner membrane. It catalyses the reaction a quinone + NADH + 5 H(+)(in) = a quinol + NAD(+) + 4 H(+)(out). Functionally, NDH-1 shuttles electrons from NADH, via FMN and iron-sulfur (Fe-S) centers, to quinones in the respiratory chain. The immediate electron acceptor for the enzyme in this species is believed to be ubiquinone. Couples the redox reaction to proton translocation (for every two electrons transferred, four hydrogen ions are translocated across the cytoplasmic membrane), and thus conserves the redox energy in a proton gradient. The sequence is that of NADH-quinone oxidoreductase subunit N from Geotalea uraniireducens (strain Rf4) (Geobacter uraniireducens).